The sequence spans 371 residues: Histidinol-phosphate aminotransferase (371 aa).

The residue at position 228 (K228) is an N6-(pyridoxal phosphate)lysine.

This sequence belongs to the class-II pyridoxal-phosphate-dependent aminotransferase family. Histidinol-phosphate aminotransferase subfamily. In terms of assembly, homodimer. Pyridoxal 5'-phosphate is required as a cofactor.

It catalyses the reaction L-histidinol phosphate + 2-oxoglutarate = 3-(imidazol-4-yl)-2-oxopropyl phosphate + L-glutamate. The protein operates within amino-acid biosynthesis; L-histidine biosynthesis; L-histidine from 5-phospho-alpha-D-ribose 1-diphosphate: step 7/9. This chain is Histidinol-phosphate aminotransferase, found in Thermosynechococcus vestitus (strain NIES-2133 / IAM M-273 / BP-1).